Consider the following 940-residue polypeptide: Isoleucine--tRNA ligase (940 aa).

The short motif at 58 to 68 (PYANGSIHIGH) is the 'HIGH' region element. L-isoleucyl-5'-AMP is bound at residue Glu-564. Positions 605 to 609 (KMSKS) match the 'KMSKS' region motif. Lys-608 contacts ATP. Positions 903, 906, 923, and 926 each coordinate Zn(2+).

It belongs to the class-I aminoacyl-tRNA synthetase family. IleS type 1 subfamily. As to quaternary structure, monomer. The cofactor is Zn(2+).

It is found in the cytoplasm. The catalysed reaction is tRNA(Ile) + L-isoleucine + ATP = L-isoleucyl-tRNA(Ile) + AMP + diphosphate. In terms of biological role, catalyzes the attachment of isoleucine to tRNA(Ile). As IleRS can inadvertently accommodate and process structurally similar amino acids such as valine, to avoid such errors it has two additional distinct tRNA(Ile)-dependent editing activities. One activity is designated as 'pretransfer' editing and involves the hydrolysis of activated Val-AMP. The other activity is designated 'posttransfer' editing and involves deacylation of mischarged Val-tRNA(Ile). This is Isoleucine--tRNA ligase from Shewanella sp. (strain W3-18-1).